We begin with the raw amino-acid sequence, 230 residues long: Bidirectional sugar transporter SWEET2b (230 aa).

Residues methionine 1 to aspartate 6 are Extracellular-facing. The chain crosses the membrane as a helical span at residues isoleucine 7 to proline 27. A MtN3/slv 1 domain is found at glycine 13–arginine 98. Topologically, residues valine 28–glycine 45 are cytoplasmic. The chain crosses the membrane as a helical span at residues leucine 46–valine 66. Residues alanine 67–leucine 72 are Extracellular-facing. The helical transmembrane segment at valine 73–phenylalanine 93 threads the bilayer. At tyrosine 94 to lysine 103 the chain is on the cytoplasmic side. A helical membrane pass occupies residues isoleucine 104 to phenylalanine 124. At phenylalanine 125–alanine 137 the chain is on the extracellular side. One can recognise a MtN3/slv 2 domain in the interval glutamine 133–lysine 217. The helical transmembrane segment at valine 138–isoleucine 158 threads the bilayer. At arginine 159 to proline 167 the chain is on the cytoplasmic side. The helical transmembrane segment at phenylalanine 168–leucine 188 threads the bilayer. Residues arginine 189–aspartate 190 are Extracellular-facing. The chain crosses the membrane as a helical span at residues phenylalanine 191 to tyrosine 211. Residues alanine 212–alanine 230 are Cytoplasmic-facing.

Belongs to the SWEET sugar transporter family. As to quaternary structure, forms homooligomers and/or heterooligomers.

It is found in the cell membrane. Functionally, mediates both low-affinity uptake and efflux of sugar across the plasma membrane. This is Bidirectional sugar transporter SWEET2b (SWEET2B) from Oryza sativa subsp. indica (Rice).